The chain runs to 257 residues: Glutamate racemase (257 aa).

Substrate contacts are provided by residues 12–13 and 44–45; these read DS and YG. Cys75 (proton donor/acceptor) is an active-site residue. 76–77 contributes to the substrate binding site; it reads NT. Cys176 serves as the catalytic Proton donor/acceptor. 177–178 lines the substrate pocket; that stretch reads TH.

This sequence belongs to the aspartate/glutamate racemases family.

It catalyses the reaction L-glutamate = D-glutamate. The protein operates within cell wall biogenesis; peptidoglycan biosynthesis. In terms of biological role, provides the (R)-glutamate required for cell wall biosynthesis. This is Glutamate racemase from Thermus thermophilus (strain ATCC BAA-163 / DSM 7039 / HB27).